We begin with the raw amino-acid sequence, 1062 residues long: MFPPSSAPLLLPQLEELVVPLHTAFTLTCQGEATIAWDVPLDVPEKTQEDNSGLFVTTISVDSASAMHTGYYRCFYRRNATEDADEAMQSIYVYVPDPDVPFVPLVVPFGNHVLSDHEEMEIQCRVSDPSANVTLINVDTQQPVPCMYDSKRGALGVFTAGTYVCKGVVNGAEHYSEDYIVHGWIGGSGLHVELTAKHTVLLVGDTITVNCLAQGSEILEDHWKYPGKVANRAIKTVHENKKDQEILYTLTVPQASVKDTGIYSCSITDVVTNMSQTKQIAIRVYASEFMSIQPKFGEYESAELDEVCEFRAEITSFPTASVTWFKDSVPLSNVTAEISTSLQKLSETSYMSVLTLIRAKEEDSGNYTMRVKNGDQSRTVSLILEVKVPAVIVDLMDIHHGSATGQSVVCITRGQPTPLVEWFVCKNIKHCANDTSSWVPLPVNSTEVTMDSRFDEDNNLETQVIFGHLENTLAVRCLARNEMAAVSREIKLVSNGPHPELTVAAAVLVLLVIVIISLIVLVVIWKQKPRYEIRWRVIESVSPDGHEYIYVDPMQLPYDSRWEFPRDRLVLGRILGSGAFGKVVEGTAYGLSRSQPVMKVAVKMLKPTARSSEKQALMSELKIMTHLGPHLNIVNLLGACTKSGPIYIITEYCFYGDLVNYLHKNRESFLNPKPEKSNKKELDIFGINPADESSRSYVILSFESKGDYMDMKQADNTQYVPMLEISNASKYSDLQGSNYDHPPSQKGSNDGEMDQLLSDNMSEGLTTNDLLSFTYQVAKGMEFLASKNCVHRDLAARNVLLSQGKIVKICDFGLARDIMHDNNYVSKGSTFLPVKWMAPESIFDNLYTTLSDVWSYGILLWEIFSLGGTPYPGMIVDSSFYNKIKSGYRMSKPEHAPQDVYDMMMKCWNSEPEKRPSFLGLSDTIASLLPSSYKRHYERVNHEFLKSDHPAVTRVCVDNDDAYIGITYKNQGKLKDRESGFDEQRLSSDSGYIIPLPDLDPISDEEYGKRNRHSSQTSEESAIETGSSSSTFAKREGETLEDITLLDEMCLDCSDLVEDSFL.

Positions M1–L27 are cleaved as a signal peptide. 5 Ig-like C2-type domains span residues T28–P96, I91–W184, L190–A281, S287–S381, and P389–V493. Over T28–A504 the chain is Extracellular. C29 and C74 form a disulfide bridge. N-linked (GlcNAc...) asparagine glycans are attached at residues N79 and N132. Disulfide bonds link C124/C165 and C211/C265. N-linked (GlcNAc...) asparagine glycosylation is found at N273, N333, N366, N433, and N444. Residues C410 and C477 are joined by a disulfide bond. A helical transmembrane segment spans residues A505–W525. The Cytoplasmic segment spans residues K526 to L1062. A phosphotyrosine; by autocatalysis mark is found at Y548 and Y550. One can recognise a Protein kinase domain in the interval L569–L945. Residues L575 to V583 and K603 each bind ATP. Y697, Y708, Y719, Y731, and Y739 each carry phosphotyrosine; by autocatalysis. Positions L734 to D754 are disordered. Residue D793 is the Proton acceptor of the active site. Phosphotyrosine; by autocatalysis is present on residues Y824 and Y963. Residues K975 to L986 show a composition bias toward basic and acidic residues. A disordered region spans residues K975–K1034. A Phosphotyrosine; by autocatalysis modification is found at Y992. A compositionally biased stretch (polar residues) spans S1014–F1032.

Belongs to the protein kinase superfamily. Tyr protein kinase family. CSF-1/PDGF receptor subfamily. As to quaternary structure, interacts with homodimeric pdgfa, pdgfb and pdgfc, and with heterodimers formed by pdgfa and pdgfb. monomer in the absence of bound ligand. Interaction with dimeric pdgfa, pdgfb and/or pdgfc leads to receptor dimerization, where both pdgfra homodimers and heterodimers with pdgfrb are observed. Post-translationally, ubiquitinated, leading to its degradation. Autophosphorylated on tyrosine residues upon ligand binding. Autophosphorylation occurs in trans, i.e. one subunit of the dimeric receptor phosphorylates tyrosine residues on the other subunit.

It is found in the cell membrane. The catalysed reaction is L-tyrosyl-[protein] + ATP = O-phospho-L-tyrosyl-[protein] + ADP + H(+). With respect to regulation, present in an inactive conformation in the absence of bound ligand. Binding of pdgfa and/or pdgfb leads to dimerization and activation by autophosphorylation on tyrosine residues. In terms of biological role, tyrosine-protein kinase that acts as a cell-surface receptor for pdgfa, pdgfb and pdgfc and plays an essential role in the regulation of embryonic development, cell proliferation, survival and chemotaxis. Depending on the context, promotes or inhibits cell proliferation and cell migration. Plays an important role in the differentiation of bone marrow-derived mesenchymal stem cells. Required for normal skeleton development. Required for normal development of the gastrointestinal tract. Plays a role in cell migration and chemotaxis in wound healing. Plays a role in platelet activation, secretion of agonists from platelet granules, and in thrombin-induced platelet aggregation. Binding of its cognate ligands - homodimeric pdgfa, homodimeric pdgfb, heterodimers formed by pdgfa and pdgfb or homodimeric pdgfc -leads to the activation of several signaling cascades; the response depends on the nature of the bound ligand and is modulated by the formation of heterodimers between pdgfra and pdgfrb. Phosphorylates pik3r1, plcg1, and ptpn11. Activation of plcg1 leads to the production of the cellular signaling molecules diacylglycerol and inositol 1,4,5-trisphosphate, mobilization of cytosolic Ca(2+) and the activation of protein kinase C. Phosphorylates pik3r1, the regulatory subunit of phosphatidylinositol 3-kinase, and thereby mediates activation of the AKT1 signaling pathway. Mediates activation of hras and of the MAP kinases mapk1/erk2 and/or mapk3/erk1. Promotes activation of STAT family members stat1, stat3 and stat5a and/or stat5b. Receptor signaling is down-regulated by protein phosphatases that dephosphorylate the receptor and its down-stream effectors, and by rapid internalization of the activated receptor. This is Platelet-derived growth factor receptor alpha (pdgfra) from Takifugu rubripes (Japanese pufferfish).